The sequence spans 276 residues: CTD small phosphatase-like protein (276 aa).

The tract at residues 1–31 (MDGPAIITQVTNPKEDEARSPVAGEKASQRN) is disordered. One can recognise an FCP1 homology domain in the interval 102–260 (LDYGKKCVVI…LDLIPFFEGL (159 aa)). D112 functions as the 4-aspartylphosphate intermediate in the catalytic mechanism. 3 residues coordinate Mg(2+): D112, D114, and N223. The active-site Proton donor is the D114.

Monomer. Interacts with REST. Mg(2+) is required as a cofactor.

The protein resides in the nucleus. The enzyme catalyses O-phospho-L-seryl-[protein] + H2O = L-seryl-[protein] + phosphate. It carries out the reaction O-phospho-L-threonyl-[protein] + H2O = L-threonyl-[protein] + phosphate. Preferentially catalyzes the dephosphorylation of 'Ser-5' within the tandem 7 residue repeats in the C-terminal domain (CTD) of the largest RNA polymerase II subunit POLR2A. Negatively regulates RNA polymerase II transcription, possibly by controlling the transition from initiation/capping to processive transcript elongation. Recruited by REST to neuronal genes that contain RE-1 elements, leading to neuronal gene silencing in non-neuronal cells. This is CTD small phosphatase-like protein (Ctdspl) from Mus musculus (Mouse).